The following is a 600-amino-acid chain: Aspartate--tRNA(Asp/Asn) ligase (600 aa).

Glu-187 provides a ligand contact to L-aspartate. The interval 211–214 (QIFK) is aspartate. Arg-233 and His-463 together coordinate L-aspartate. 233–235 (RDE) is a binding site for ATP. Position 497 (Glu-497) interacts with ATP. Residue Arg-504 coordinates L-aspartate. 549–552 (GVDR) serves as a coordination point for ATP.

Belongs to the class-II aminoacyl-tRNA synthetase family. Type 1 subfamily. Homodimer.

It localises to the cytoplasm. It catalyses the reaction tRNA(Asx) + L-aspartate + ATP = L-aspartyl-tRNA(Asx) + AMP + diphosphate. Aspartyl-tRNA synthetase with relaxed tRNA specificity since it is able to aspartylate not only its cognate tRNA(Asp) but also tRNA(Asn). Reaction proceeds in two steps: L-aspartate is first activated by ATP to form Asp-AMP and then transferred to the acceptor end of tRNA(Asp/Asn). The sequence is that of Aspartate--tRNA(Asp/Asn) ligase from Wolbachia sp. subsp. Drosophila simulans (strain wRi).